A 997-amino-acid chain; its full sequence is Serine-repeat antigen protein 5 (997 aa).

Positions 1–22 are cleaved as a signal peptide; the sequence is MKSYISLFFILCVIFNKNVIKC. Disordered stretches follow at residues 26–107 and 181–252; these read SQTG…EKQD and LPSN…PRNL. Gly residues predominate over residues 30–51; the sequence is NTGGGQAGNTGGDQAGSTGGSP. A compositionally biased stretch (low complexity) spans 52-67; sequence QGSTGASPQGSTGASP. The span at 68 to 84 shows a compositional bias: polar residues; that stretch reads QGSTGASQPGSSEPSNP. 3 stretches are compositionally biased toward low complexity: residues 85–103, 183–196, and 205–235; these read VSSGHSVSTVSVSQTSTSS, SNGTTGEQGSSTGT, and SDSSSSSSSSSSSSSSSSSSSSSSSSSSSES. At S183 the chain carries Phosphoserine. The N-linked (GlcNAc...) asparagine glycan is linked to N184. An interaction with PTKL region spans residues 216–253; it reads SSSSSSSSSSSSSSSSSSESLPANGPDSPTVKPPRNLQ. N-linked (GlcNAc...) asparagine glycosylation is present at N318. The tract at residues 373-390 is interaction with host VTN; the sequence is YKYLSEDIVSKFKEIKAE. Cysteines 445 and 497 form a disulfide. T549 carries the phosphothreonine; by CPK1 modification. Disulfide bonds link C567–C572, C581–C610, C593–C636, C627–C672, and C755–C809. Positions 579 to 997 are thiol-protease-like; the sequence is NNCISNLQVE…TNNECYFCYV (419 aa). Catalysis depends on residues H762 and N787. N828 is a glycosylation site (N-linked (GlcNAc...) asparagine). The propeptide at 843–886 is inhibition peptide; that stretch reads KASPEFYHNLYFKNFNVGKKNLFSEKEDNENNKKLGNNYIIFGQ. Phosphoserine is present on S866.

Belongs to the peptidase C1 family. As to quaternary structure, may interact (via C-terminus) with PTKL (via SAM domain). Interacts (via C-terminus) with human VTN (via hemopexin repeat 2); may form heterotetramers of two VTN and SERA5 P47 heterodimers; the interaction may protect merozoites from phagocytosis by host monocytes; VTN glycosylation appears to be dispensable for the interaction. In terms of assembly, monomer. Interacts with kinase CPK1/CDPK1 at the schizont stage. In terms of processing, phosphorylation by CPK1/CDPK1 increases SERA5 protease activity towards a synthetic peptide in vitro. Post-translationally, just prior to merozoite egress from host erythrocytes, proteolytically cleaved into multiple fragments. Cleaved by SUB1 into p47 and p73, p73 is further cleaved by SUB1 into p56 and p18 and p56 is further processed into p50 by an unidentified protease. p47 remains covalently associated with p18 via disulfide bond. p47 can be processed into p25n and p25c by SUB1. p25c and p25n remain associated with p18. Proteolytic processing is essential for merozoite egress from host erythrocytes. The cleavage of the propeptide to produce p50 is necessary for protease activity and to promote merozoite egress.

Its subcellular location is the parasitophorous vacuole. The protein localises to the secreted. It localises to the cell membrane. Its function is as follows. Plays an essential role during the asexual blood stage development by controlling the kinetics of merozoite egress from host erythrocytes. Specifically, prevents premature rupture of the parasitophorous vacuole and host erythrocyte membranes. May prevent merozoite phagocytosis by host monocytes via interaction with host VTN at the merozoite surface. Plays a role in parasite growth. Functionally, protease activity is controversial. Has been shown in a number of studies to have protease activity towards a synthetic peptide in vitro. Has also been shown to lack protease activity towards a synthetic peptide in vitro. This chain is Serine-repeat antigen protein 5, found in Plasmodium falciparum (isolate 3D7).